The primary structure comprises 93 residues: Uteroglobin (93 aa).

Residues 1–17 (MKLAITIILVMLSVCYS) form the signal peptide.

This sequence belongs to the secretoglobin family. As to quaternary structure, antiparallel homodimer; disulfide-linked. Interaction with LMBR1L is controversial.

Its subcellular location is the secreted. Binds phosphatidylcholine, phosphatidylinositol, polychlorinated biphenyls (PCB) and weakly progesterone, potent inhibitor of phospholipase A2. In Neotomodon alstoni (Mexican volcano mouse), this protein is Uteroglobin (SCGB1A1).